An 891-amino-acid chain; its full sequence is DNA mismatch repair protein MutS (891 aa).

ATP is bound at residue 634-641 (GPNMGGKS).

It belongs to the DNA mismatch repair MutS family.

Functionally, this protein is involved in the repair of mismatches in DNA. It is possible that it carries out the mismatch recognition step. This protein has a weak ATPase activity. The protein is DNA mismatch repair protein MutS of Burkholderia mallei (strain NCTC 10247).